A 334-amino-acid polypeptide reads, in one-letter code: Protein-methionine-sulfoxide reductase catalytic subunit MsrP (334 aa).

The segment at residues 1–44 (MKKIRPLTEADVTAESAFFMQRRQVLKALGISAAALSLPSTAQA) is a signal peptide (tat-type signal). Mo-molybdopterin contacts are provided by residues Asn88, 91–92 (YE), Cys146, Thr181, Asn233, Arg238, and 249–251 (GIK).

The protein belongs to the MsrP family. As to quaternary structure, heterodimer of a catalytic subunit (MsrP) and a heme-binding subunit (MsrQ). It depends on Mo-molybdopterin as a cofactor. Predicted to be exported by the Tat system. The position of the signal peptide cleavage has not been experimentally proven.

The protein resides in the periplasm. It catalyses the reaction L-methionyl-[protein] + a quinone + H2O = L-methionyl-(S)-S-oxide-[protein] + a quinol. It carries out the reaction L-methionyl-[protein] + a quinone + H2O = L-methionyl-(R)-S-oxide-[protein] + a quinol. In terms of biological role, part of the MsrPQ system that repairs oxidized periplasmic proteins containing methionine sulfoxide residues (Met-O), using respiratory chain electrons. Thus protects these proteins from oxidative-stress damage caused by reactive species of oxygen and chlorine generated by the host defense mechanisms. MsrPQ is essential for the maintenance of envelope integrity under bleach stress, rescuing a wide series of structurally unrelated periplasmic proteins from methionine oxidation, including the primary periplasmic chaperone SurA and the lipoprotein Pal. The catalytic subunit MsrP is non-stereospecific, being able to reduce both (R-) and (S-) diastereoisomers of methionine sulfoxide. This Salmonella agona (strain SL483) protein is Protein-methionine-sulfoxide reductase catalytic subunit MsrP.